The chain runs to 150 residues: Ribosome maturation factor RimP (150 aa).

The protein belongs to the RimP family.

The protein localises to the cytoplasm. Functionally, required for maturation of 30S ribosomal subunits. In Yersinia pestis bv. Antiqua (strain Antiqua), this protein is Ribosome maturation factor RimP.